A 718-amino-acid polypeptide reads, in one-letter code: Ribosome-releasing factor 2, mitochondrial (718 aa).

Residues 1–29 (MLKCAWQNGPRQSNRWLWQLSNQIWKRSY) constitute a mitochondrion transit peptide. In terms of domain architecture, tr-type G spans 31–310 (SKIRNIGILA…AVNSYLPAPE (280 aa)). GTP is bound by residues 40–47 (AHIDAGKT), 104–108 (DTPGH), and 158–161 (NKMD).

It belongs to the TRAFAC class translation factor GTPase superfamily. Classic translation factor GTPase family. EF-G/EF-2 subfamily.

The protein resides in the mitochondrion. Mitochondrial GTPase that mediates the disassembly of ribosomes from messenger RNA at the termination of mitochondrial protein biosynthesis. Not involved in the GTP-dependent ribosomal translocation step during translation elongation. The protein is Ribosome-releasing factor 2, mitochondrial of Drosophila erecta (Fruit fly).